The chain runs to 153 residues: Putative pre-16S rRNA nuclease (153 aa).

This sequence belongs to the YqgF nuclease family.

The protein resides in the cytoplasm. Its function is as follows. Could be a nuclease involved in processing of the 5'-end of pre-16S rRNA. This Prochlorococcus marinus (strain SARG / CCMP1375 / SS120) protein is Putative pre-16S rRNA nuclease.